Consider the following 728-residue polypeptide: MALYRRGTASMDADGTVHGTDTKWKDQLALIRVGATIVFLEQPIKLAVISDIVSDTELKAISTDGQTAADGKYVILLNDSLTVNGLAQNVAETLRYYQSKETEIASALDIIADLDMDNLNNIVQEIKSNKSAAEAAQNQAELARDSANSARDESISIKNQTQQISDSAIGSINAAKDKAITNVQQKENSAVTHINSEEAAAIQAINDAKGDLSGYVNDAQTAAQTATSAKNDAQAARDAAVSAKDAAAVSAQEAQDAANSVNADNLLTKDGNLSGLADKEQSKKNLAVNRLNQPRGDLTEIYSNDDRTGFKLIVKDSGDWGAMTHDGSENKALGVNFGGTGGTTEEQARTSLKVYKLDRTNLGEKHLDSITGEGDGPGIYMQSSSALATASRGYPEATAGMLEVLPNGANGASACIQRFTPFTYLGTAPESGNSQNEYARAGRGTFYIRMKNGNNAKFSPWIPFQASSSGNVVSSPASNEKSSWVDYVNALSSQPSSLASYNVNSVGWVTAISVRHRNGQGDGSAFGFVIEDASMTSPHYKDVRLRKQTGAGQWQSTQVIWNTGNTTVDSNGFIKRASPIVDIFGNGSHRTNDESEGCTVERISTGEYLIRGCLSLNSDLAWGGVNGGIEIPKDINGQPILWVDYDVNPDGSLVIKTYHRTHDNAPSFARNHKDGYSDGDPIDIPSDVFVSVRVEMPNDSIYNKKVEECKRNHERMVSGEFVESLKNT.

It is found in the virion. Functionally, probable tail fiber protein. The polypeptide is Probable tail fiber protein (Escherichia coli (Bacteriophage T1)).